The sequence spans 415 residues: Hydroxysteroid dehydrogenase-like protein 2 (415 aa).

Residues 17–23 (GASRGIG), lysine 42, and aspartate 74 contribute to the NADP(+) site. The Proton acceptor role is filled by tyrosine 168. Lysine 172 serves as a coordination point for NADP(+). The 109-residue stretch at 304 to 412 (AGPVSEMFNT…KLEKMMAMMK (109 aa)) folds into the SCP2 domain.

It belongs to the short-chain dehydrogenases/reductases (SDR) family.

The protein resides in the peroxisome. The protein localises to the mitochondrion. Functionally, has apparently no steroid dehydrogenase activity. Might act as a metabolic regulator that affects systemic adaptation to nutritional cues. The chain is Hydroxysteroid dehydrogenase-like protein 2 (hsdl2) from Danio rerio (Zebrafish).